The chain runs to 86 residues: MDSYSIIIKPHVTEKTMNLIDKNNEITFVVKRDANKGQIKRAFEELYEEKVARVTTHITPRGNKVAFIKLVEEEMAEELAVKIGVF.

This sequence belongs to the universal ribosomal protein uL23 family. As to quaternary structure, part of the 50S ribosomal subunit. Contacts protein L29.

Functionally, binds to 23S rRNA. One of the proteins that surrounds the polypeptide exit tunnel on the outside of the ribosome. This chain is Large ribosomal subunit protein uL23, found in Methanobrevibacter smithii (strain ATCC 35061 / DSM 861 / OCM 144 / PS).